Reading from the N-terminus, the 585-residue chain is ATP-dependent RNA helicase DBP3 (585 aa).

The interval 1–124 (MTTSATEKAL…SSSASAASFT (124 aa)) is disordered. Residues 26–43 (AKAAAAAGASASTSLEGS) show a composition bias toward low complexity. Basic residues-rich tracts occupy residues 52-64 (KDKK…KDKK) and 79-93 (AKKR…KKAA). Low complexity predominate over residues 94–124 (AKSGAATSLESTPAASPAPAASSSASAASFT). The Q motif signature appears at 159-187 (FRELDGKVDAAVKKTLDSQGFSTPTPIQA). The 188-residue stretch at 190-377 (WPVLLQNKDV…ESFMNGPVRV (188 aa)) folds into the Helicase ATP-binding domain. 203–210 (AETGSGKT) contacts ATP. A DEAD box motif is present at residues 322–325 (DEAD). Residues 406-554 (RLNDFLRSVN…KVPDALTKFP (149 aa)) form the Helicase C-terminal domain.

Belongs to the DEAD box helicase family. DDX5/DBP2 subfamily.

The protein resides in the nucleus. It is found in the nucleolus. The enzyme catalyses ATP + H2O = ADP + phosphate + H(+). ATP-dependent RNA helicase required for 60S ribosomal subunit synthesis. Involved in efficient pre-rRNA processing, predominantly at site A3, which is necessary for the normal formation of 25S and 5.8S rRNAs. The polypeptide is ATP-dependent RNA helicase DBP3 (DBP3) (Mycosarcoma maydis (Corn smut fungus)).